We begin with the raw amino-acid sequence, 255 residues long: 5'-nucleotidase SurE (255 aa).

A divalent metal cation is bound by residues Asp-8, Asp-9, Ser-40, and Asn-93.

The protein belongs to the SurE nucleotidase family. A divalent metal cation is required as a cofactor.

The protein resides in the cytoplasm. It carries out the reaction a ribonucleoside 5'-phosphate + H2O = a ribonucleoside + phosphate. Nucleotidase that shows phosphatase activity on nucleoside 5'-monophosphates. The protein is 5'-nucleotidase SurE of Nitrobacter hamburgensis (strain DSM 10229 / NCIMB 13809 / X14).